Consider the following 338-residue polypeptide: 1-aminocyclopropane-1-carboxylate deaminase (338 aa).

An N6-(pyridoxal phosphate)lysine modification is found at lysine 51. Serine 78 (nucleophile) is an active-site residue.

It belongs to the ACC deaminase/D-cysteine desulfhydrase family. Homotrimer. It depends on pyridoxal 5'-phosphate as a cofactor.

The catalysed reaction is 1-aminocyclopropane-1-carboxylate + H2O = 2-oxobutanoate + NH4(+). Its function is as follows. Catalyzes a cyclopropane ring-opening reaction, the irreversible conversion of 1-aminocyclopropane-1-carboxylate (ACC) to ammonia and alpha-ketobutyrate. Allows growth on ACC as a nitrogen source. The protein is 1-aminocyclopropane-1-carboxylate deaminase of Methylibium petroleiphilum (strain ATCC BAA-1232 / LMG 22953 / PM1).